The following is a 376-amino-acid chain: UPF0754 membrane protein SE_1527 (376 aa).

The next 2 membrane-spanning stretches (helical) occupy residues 4–24 (ILLV…TNMI) and 356–376 (TLGF…AIFV).

Belongs to the UPF0754 family.

The protein localises to the cell membrane. This chain is UPF0754 membrane protein SE_1527, found in Staphylococcus epidermidis (strain ATCC 12228 / FDA PCI 1200).